Reading from the N-terminus, the 139-residue chain is uncharacterized protein (139 aa).

Residues 8–139 enclose the HTH marR-type domain; sequence ANLLDHALTK…FLAIIAKLAQ (132 aa). Positions 53 to 76 form a DNA-binding region, H-T-H motif; it reads IKDILKEVTLSPSATTTALNHLEQ.

This is an uncharacterized protein from Bacillus subtilis (strain 168).